The chain runs to 121 residues: UPF0045 protein sll0230 (121 aa).

It belongs to the UPF0045 family.

The chain is UPF0045 protein sll0230 from Synechocystis sp. (strain ATCC 27184 / PCC 6803 / Kazusa).